A 202-amino-acid chain; its full sequence is ATP-dependent Clp protease proteolytic subunit (202 aa).

S98 (nucleophile) is an active-site residue. The active site involves H123.

This sequence belongs to the peptidase S14 family. As to quaternary structure, fourteen ClpP subunits assemble into 2 heptameric rings which stack back to back to give a disk-like structure with a central cavity, resembling the structure of eukaryotic proteasomes.

It is found in the cytoplasm. The catalysed reaction is Hydrolysis of proteins to small peptides in the presence of ATP and magnesium. alpha-casein is the usual test substrate. In the absence of ATP, only oligopeptides shorter than five residues are hydrolyzed (such as succinyl-Leu-Tyr-|-NHMec, and Leu-Tyr-Leu-|-Tyr-Trp, in which cleavage of the -Tyr-|-Leu- and -Tyr-|-Trp bonds also occurs).. In terms of biological role, cleaves peptides in various proteins in a process that requires ATP hydrolysis. Has a chymotrypsin-like activity. Plays a major role in the degradation of misfolded proteins. In Magnetococcus marinus (strain ATCC BAA-1437 / JCM 17883 / MC-1), this protein is ATP-dependent Clp protease proteolytic subunit.